The primary structure comprises 412 residues: Arginine biosynthesis bifunctional protein ArgJ (412 aa).

Substrate-binding residues include threonine 162, lysine 188, threonine 199, glutamate 285, asparagine 407, and threonine 412. Threonine 199 (nucleophile) is an active-site residue.

Belongs to the ArgJ family. In terms of assembly, heterotetramer of two alpha and two beta chains.

It localises to the cytoplasm. The catalysed reaction is N(2)-acetyl-L-ornithine + L-glutamate = N-acetyl-L-glutamate + L-ornithine. It catalyses the reaction L-glutamate + acetyl-CoA = N-acetyl-L-glutamate + CoA + H(+). It functions in the pathway amino-acid biosynthesis; L-arginine biosynthesis; L-ornithine and N-acetyl-L-glutamate from L-glutamate and N(2)-acetyl-L-ornithine (cyclic): step 1/1. It participates in amino-acid biosynthesis; L-arginine biosynthesis; N(2)-acetyl-L-ornithine from L-glutamate: step 1/4. In terms of biological role, catalyzes two activities which are involved in the cyclic version of arginine biosynthesis: the synthesis of N-acetylglutamate from glutamate and acetyl-CoA as the acetyl donor, and of ornithine by transacetylation between N(2)-acetylornithine and glutamate. This is Arginine biosynthesis bifunctional protein ArgJ from Staphylococcus saprophyticus subsp. saprophyticus (strain ATCC 15305 / DSM 20229 / NCIMB 8711 / NCTC 7292 / S-41).